Reading from the N-terminus, the 273-residue chain is Large ribosomal subunit protein uL2cz/uL2cy (273 aa).

Disordered stretches follow at residues M1–R27 and P225–K273.

It belongs to the universal ribosomal protein uL2 family. Part of the 50S ribosomal subunit.

It localises to the plastid. The protein resides in the chloroplast. The chain is Large ribosomal subunit protein uL2cz/uL2cy (rpl2-A) from Lolium perenne (Perennial ryegrass).